The following is a 543-amino-acid chain: ABC transport system permease protein p69 (543 aa).

12 helical membrane-spanning segments follow: residues 18–38 (IWYW…YSWI), 78–98 (AFFV…FSYW), 115–135 (ITIV…SNLF), 141–161 (ATLT…TTFF), 211–231 (TLLS…PLSI), 237–257 (LVLI…VVVF), 288–308 (IIFI…LVTI), 354–374 (ISLI…SCNL), 379–399 (FSIS…ILLF), 413–433 (IILV…SINF), 482–502 (LILF…NFFE), and 510–530 (GSVT…FLSV). The 183-residue stretch at 74–256 (LAQTAFFVTG…TFLIFIEVVV (183 aa)) folds into the ABC transmembrane type-1 domain.

Belongs to the binding-protein-dependent transport system permease family.

The protein resides in the cell membrane. Functionally, probably part of a high-affinity transport system. The polypeptide is ABC transport system permease protein p69 (p69) (Mycoplasma genitalium (strain ATCC 33530 / DSM 19775 / NCTC 10195 / G37) (Mycoplasmoides genitalium)).